The primary structure comprises 384 residues: Alanine racemase (384 aa).

Lys-46 (proton acceptor; specific for D-alanine) is an active-site residue. At Lys-46 the chain carries N6-(pyridoxal phosphate)lysine. Residue Arg-144 participates in substrate binding. The active-site Proton acceptor; specific for L-alanine is Tyr-278. Met-326 contributes to the substrate binding site.

Belongs to the alanine racemase family. Requires pyridoxal 5'-phosphate as cofactor.

It catalyses the reaction L-alanine = D-alanine. It participates in amino-acid biosynthesis; D-alanine biosynthesis; D-alanine from L-alanine: step 1/1. Catalyzes the interconversion of L-alanine and D-alanine. May also act on other amino acids. This chain is Alanine racemase (alr), found in Frankia casuarinae (strain DSM 45818 / CECT 9043 / HFP020203 / CcI3).